We begin with the raw amino-acid sequence, 869 residues long: Bifunctional uridylyltransferase/uridylyl-removing enzyme (869 aa).

The segment at 1 to 332 (MTDAPAERPD…QFDGEATPES (332 aa)) is uridylyltransferase. The tract at residues 333-691 (LGGGFSLRRG…RRAVPDNDAL (359 aa)) is uridylyl-removing. The region spanning 450-572 (VDQHTLMVLR…VGTRERLDYL (123 aa)) is the HD domain. 2 consecutive ACT domains span residues 692–774 (EVFV…RAVP) and 798–869 (RISL…LDPV).

This sequence belongs to the GlnD family. Mg(2+) is required as a cofactor.

It catalyses the reaction [protein-PII]-L-tyrosine + UTP = [protein-PII]-uridylyl-L-tyrosine + diphosphate. The enzyme catalyses [protein-PII]-uridylyl-L-tyrosine + H2O = [protein-PII]-L-tyrosine + UMP + H(+). With respect to regulation, uridylyltransferase (UTase) activity is inhibited by glutamine, while glutamine activates uridylyl-removing (UR) activity. In terms of biological role, modifies, by uridylylation and deuridylylation, the PII regulatory proteins (GlnB and homologs), in response to the nitrogen status of the cell that GlnD senses through the glutamine level. Under low glutamine levels, catalyzes the conversion of the PII proteins and UTP to PII-UMP and PPi, while under higher glutamine levels, GlnD hydrolyzes PII-UMP to PII and UMP (deuridylylation). Thus, controls uridylylation state and activity of the PII proteins, and plays an important role in the regulation of nitrogen assimilation and metabolism. The sequence is that of Bifunctional uridylyltransferase/uridylyl-removing enzyme from Xanthomonas oryzae pv. oryzae (strain MAFF 311018).